The sequence spans 408 residues: Diguanylate cyclase DgcN (408 aa).

Topologically, residues 1–24 (MMDNDNSLNKRPTFKRALRNISMT) are cytoplasmic. A helical membrane pass occupies residues 25–45 (SIFITMMLIWLLLSVTSVLTL). Topologically, residues 46–52 (KQYAQKN) are periplasmic. Residues 53–73 (LALTAATMTYSLEAAVVFADG) traverse the membrane as a helical segment. At 74–112 (PAATETLAALGQQGQFSTAEVRDKQQNILASWHYTRKDP) the chain is on the cytoplasmic side. A helical membrane pass occupies residues 113 to 133 (GDTFSNFISHWLFPAPIIQPI). The Periplasmic portion of the chain corresponds to 134–154 (RHNGETIGEVRLTARDSSISH). The helical transmembrane segment at 155–175 (FIWFSLAVLTGCILLASGIAI) threads the bilayer. The Cytoplasmic segment spans residues 176 to 408 (TLTRHLHNGL…KHQRAEKLVR (233 aa)). The region spanning 183-236 (NGLVEALKNITDVVHDVRSNRNFSRRVSEERIAEFHRFALDFNSLLDEMEEWQL) is the HAMP domain. The GGDEF domain occupies 278 to 408 (KTSALLFLDG…KHQRAEKLVR (131 aa)). Position 286 (Asp-286) interacts with Mg(2+). The substrate site is built by Asn-294, His-299, and Asp-303. Asp-329 contributes to the Mg(2+) binding site. Asp-329 functions as the Proton acceptor in the catalytic mechanism.

In terms of assembly, homodimer. Interacts with the cell division proteins FtsZ and ZipA. It depends on Mg(2+) as a cofactor.

Its subcellular location is the cell inner membrane. It carries out the reaction 2 GTP = 3',3'-c-di-GMP + 2 diphosphate. Its pathway is purine metabolism; 3',5'-cyclic di-GMP biosynthesis. Inhibited by YfiR, which prevents relocation to the midcell. A reductive stress signal is required to inactivate YfiR and turn on the DGC activity of DgcN. Its function is as follows. Bifunctional protein that catalyzes the synthesis of cyclic-di-GMP (c-di-GMP) in response to reductive stress and then dynamically relocates to the division site to arrest cell division in response to envelope stress. In the presence of high intracellular c-di-GMP levels, and in response to envelope stress, interacts with cell division proteins and halts cell division, without disassembling the Z ring, but by blocking its further progress toward cytokinesis. Part of a network that regulates cell motility by altering levels of c-di-GMP. The sequence is that of Diguanylate cyclase DgcN from Escherichia coli (strain K12).